The sequence spans 493 residues: Guanosine-5'-triphosphate,3'-diphosphate pyrophosphatase (493 aa).

Belongs to the GppA/Ppx family. GppA subfamily.

The catalysed reaction is guanosine 3'-diphosphate 5'-triphosphate + H2O = guanosine 3',5'-bis(diphosphate) + phosphate + H(+). It functions in the pathway purine metabolism; ppGpp biosynthesis; ppGpp from GTP: step 2/2. Its function is as follows. Catalyzes the conversion of pppGpp to ppGpp. Guanosine pentaphosphate (pppGpp) is a cytoplasmic signaling molecule which together with ppGpp controls the 'stringent response', an adaptive process that allows bacteria to respond to amino acid starvation, resulting in the coordinated regulation of numerous cellular activities. This chain is Guanosine-5'-triphosphate,3'-diphosphate pyrophosphatase, found in Salmonella paratyphi A (strain ATCC 9150 / SARB42).